The following is a 328-amino-acid chain: Probable cytosolic iron-sulfur protein assembly protein 1 (328 aa).

WD repeat units follow at residues Leu-12 to Glu-49, Ala-54 to Glu-93, Gly-102 to Glu-141, Glu-148 to Ala-187, Gly-192 to Phe-233, Val-246 to Val-284, and Ala-291 to Glu-328.

It belongs to the WD repeat CIA1 family. As to quaternary structure, interacts with NAR1.

The protein localises to the cytoplasm. The protein resides in the nucleus. In terms of biological role, essential component of the cytosolic iron-sulfur (Fe/S) protein assembly machinery. Required for the maturation of extramitochondrial Fe/S proteins. The protein is Probable cytosolic iron-sulfur protein assembly protein 1 of Eremothecium gossypii (strain ATCC 10895 / CBS 109.51 / FGSC 9923 / NRRL Y-1056) (Yeast).